The following is a 136-amino-acid chain: Type II nicking enzyme V.XorIIP (136 aa).

This sequence belongs to the Vsr family.

In terms of biological role, may nick XorII sequences that contain T/G mispairs resulting from m5C-deamination. If unrepaired, these mismatches can lead to C-to-T transition mutations. The very short patch (VSP) repair process counteracts the mutagenic process by repairing the mismatches in favor of the G-containing strand. This enzyme is an endonuclease that nicks double-stranded DNA within the sequence CGATCG (C-methylation site unknown) next to the thymidine residue that is mismatched to 2'-deoxyguanosine. The incision is mismatch-dependent and strand-specific. This Xanthomonas oryzae pv. oryzae (strain KACC10331 / KXO85) protein is Type II nicking enzyme V.XorIIP.